A 354-amino-acid chain; its full sequence is Uroporphyrinogen decarboxylase (354 aa).

Substrate-binding positions include Arg25–Arg29, Asp75, Tyr152, Thr207, and His330.

Belongs to the uroporphyrinogen decarboxylase family. In terms of assembly, homodimer.

The protein resides in the cytoplasm. The catalysed reaction is uroporphyrinogen III + 4 H(+) = coproporphyrinogen III + 4 CO2. Its pathway is porphyrin-containing compound metabolism; protoporphyrin-IX biosynthesis; coproporphyrinogen-III from 5-aminolevulinate: step 4/4. Its function is as follows. Catalyzes the decarboxylation of four acetate groups of uroporphyrinogen-III to yield coproporphyrinogen-III. The polypeptide is Uroporphyrinogen decarboxylase (Xanthomonas oryzae pv. oryzae (strain MAFF 311018)).